Consider the following 322-residue polypeptide: Probable cell division protein WhiA (322 aa).

A DNA-binding region (H-T-H motif) is located at residues S279–S312.

This sequence belongs to the WhiA family.

Functionally, involved in cell division and chromosome segregation. The protein is Probable cell division protein WhiA of Desulforamulus reducens (strain ATCC BAA-1160 / DSM 100696 / MI-1) (Desulfotomaculum reducens).